The following is a 225-amino-acid chain: Ribonuclease 3 (225 aa).

In terms of domain architecture, RNase III spans 5 to 127 (IEKLTRQLGY…IIGAVYLDSD (123 aa)). Glutamate 40 provides a ligand contact to Mg(2+). Residue aspartate 44 is part of the active site. Mg(2+)-binding residues include aspartate 113 and glutamate 116. The active site involves glutamate 116. A DRBM domain is found at 154–224 (DPKTRLQEFL…AELALEQLTN (71 aa)).

This sequence belongs to the ribonuclease III family. In terms of assembly, homodimer. The cofactor is Mg(2+).

It localises to the cytoplasm. The enzyme catalyses Endonucleolytic cleavage to 5'-phosphomonoester.. In terms of biological role, digests double-stranded RNA. Involved in the processing of primary rRNA transcript to yield the immediate precursors to the large and small rRNAs (23S and 16S). Processes some mRNAs, and tRNAs when they are encoded in the rRNA operon. Processes pre-crRNA and tracrRNA of type II CRISPR loci if present in the organism. In Vibrio vulnificus (strain CMCP6), this protein is Ribonuclease 3.